Consider the following 31-residue polypeptide: Cyclotide vpub-A (31 aa).

A cross-link (cyclopeptide (Gly-Asn)) is located at residues 1-31 (GVIPCGESCVFIPCISAVIGCSCKSKVCYRN). 3 cysteine pairs are disulfide-bonded: Cys-5-Cys-21, Cys-9-Cys-23, and Cys-14-Cys-28.

The protein belongs to the cyclotide family. Bracelet subfamily. In terms of processing, this is a cyclic peptide.

In terms of biological role, probably participates in a plant defense mechanism. In Viola pubescens (Downy yellow violet), this protein is Cyclotide vpub-A.